The chain runs to 93 residues: Small ribosomal subunit protein bS6 (93 aa).

The protein belongs to the bacterial ribosomal protein bS6 family.

Functionally, binds together with bS18 to 16S ribosomal RNA. In Treponema pallidum (strain Nichols), this protein is Small ribosomal subunit protein bS6 (rpsF).